Here is a 289-residue protein sequence, read N- to C-terminus: Ribosomal RNA small subunit methyltransferase A (289 aa).

S-adenosyl-L-methionine-binding residues include N28, L30, G55, E76, D101, and N125.

It belongs to the class I-like SAM-binding methyltransferase superfamily. rRNA adenine N(6)-methyltransferase family. RsmA subfamily.

The protein localises to the cytoplasm. It catalyses the reaction adenosine(1518)/adenosine(1519) in 16S rRNA + 4 S-adenosyl-L-methionine = N(6)-dimethyladenosine(1518)/N(6)-dimethyladenosine(1519) in 16S rRNA + 4 S-adenosyl-L-homocysteine + 4 H(+). In terms of biological role, specifically dimethylates two adjacent adenosines (A1518 and A1519) in the loop of a conserved hairpin near the 3'-end of 16S rRNA in the 30S particle. May play a critical role in biogenesis of 30S subunits. This is Ribosomal RNA small subunit methyltransferase A from Clostridioides difficile (strain 630) (Peptoclostridium difficile).